Consider the following 251-residue polypeptide: Capsid protein (251 aa).

The Bipartite nuclear localization signal signature appears at 3–20; the sequence is KRDAPWRLTAGTAKISRT. The short motif at 35-49 is the Nuclear localization signal element; that stretch reads RASAWVNRPMYRKPR. The segment at 63–80 is a zinc-finger region; that stretch reads CEGPCKVQSFEQRHDVSH. A Nuclear export signal motif is present at residues 96-117; it reads ITHRVGKRFCVKSVYILGKIWM. The short motif at 195 to 242 is the Bipartite nuclear localization signal element; sequence RRFWKVNNHVVYNHQEAGKYENHTENALLLYMACTHASNPVYATLKIR.

This sequence belongs to the geminiviridae capsid protein family. Homomultimer. Binds to single-stranded and double-stranded viral DNA. Interacts (via nuclear localization signals) with host importin alpha-1a.

The protein resides in the virion. Its subcellular location is the host nucleus. Encapsidates the viral DNA into characteristic twinned ('geminate') particles. Binds the genomic viral ssDNA and shuttles it into and out of the cell nucleus. The CP of bipartite geminiviruses is not required for cell-to-cell or systemic movement. In Capsicum annuum (Capsicum pepper), this protein is Capsid protein.